The sequence spans 127 residues: MFAHKLNVSVISPEKILYKGEVDSLVVPGSEGFFGILPNHAPLVATLGIGVLEIRKGEKLKNISVEGGFIEVKDNTVSILTDHGALKEDIDIEAEKKALAEVEKLSPSDSKNLLLQKTKTRILVASR.

It belongs to the ATPase epsilon chain family. As to quaternary structure, F-type ATPases have 2 components, CF(1) - the catalytic core - and CF(0) - the membrane proton channel. CF(1) has five subunits: alpha(3), beta(3), gamma(1), delta(1), epsilon(1). CF(0) has three main subunits: a, b and c.

The protein resides in the cell inner membrane. Functionally, produces ATP from ADP in the presence of a proton gradient across the membrane. In Leptospira borgpetersenii serovar Hardjo-bovis (strain JB197), this protein is ATP synthase epsilon chain.